A 283-amino-acid chain; its full sequence is uncharacterized protein (283 aa).

The first 21 residues, 1–21, serve as a signal peptide directing secretion; sequence MKLKLKFLLISLLGSSLLLSA. A lipid anchor (N-palmitoyl cysteine) is attached at cysteine 22. Residue cysteine 22 is the site of S-diacylglycerol cysteine attachment.

Belongs to the MG439/MG440 family.

It localises to the cell membrane. This is an uncharacterized protein from Mycoplasma pneumoniae (strain ATCC 29342 / M129 / Subtype 1) (Mycoplasmoides pneumoniae).